The following is a 506-amino-acid chain: MERIRPPTVVSQRKRQKGMYSPKLSCGYEIKFNKLVIFIMQRKMGMTRRTFLMELARSKGFRVESELSDSVTHIVAENNSYPEVLDWLKGQAVGDSSRFEILDISWLTACMEMGRPVDLEKKYHLVEQAGQYPTLKTPESEVSSFTASKVSQYSCQRKTTLNNCNKKFTDAFEIMAENYEFKENEIFCLEFLRAASVLKSLPFPVTRMKDIQGLPCMGDRVRDVIEEIIEEGESSRAKDVLNDERYKSFKEFTSVFGVGVKTSEKWFRMGLRTVEEVKADKTLKLSKMQRAGFLYYEDLVSCVSKAEADAVSSIVKNTVCTFLPDALVTITGGFRRGKKIGHDIDFLITSPGQREDDELLHKGLLLYCDIIESTFVKEQIPSRHVDAMDHFQKCFAILKLYQPRVDNSSYNMSKKCDMAEVKDWKAIRVDLVITPFEQYAYALLGWTGSRQFGRDLRRYATHERKMMLDNHALYDKRKRVFLKAGSEEEIFAHLGLDYVEPWERNA.

Positions Ser11–Lys17 match the Nuclear localization signal motif. Positions Gly27–His124 constitute a BRCT domain. Residues Val258–Thr262 are involved in DNA binding. A 2'-deoxyribonucleoside 5'-triphosphate-binding positions include Gly333 to Lys338 and His342 to Asp345. 3 residues coordinate Mg(2+): Asp343, Asp345, and Asp430. Residue Gly445–Trp446 participates in a 2'-deoxyribonucleoside 5'-triphosphate binding.

It belongs to the DNA polymerase type-X family. Requires Mg(2+) as cofactor.

The protein localises to the nucleus. It catalyses the reaction DNA(n) + a 2'-deoxyribonucleoside 5'-triphosphate = DNA(n+1) + diphosphate. Template-independent DNA polymerase which catalyzes the random addition of deoxynucleoside 5'-triphosphate to the 3'-end of a DNA initiator. One of the in vivo functions of this enzyme is the addition of nucleotides at the junction (N region) of rearranged Ig heavy chain and T-cell receptor gene segments during the maturation of B- and T-cells. This is DNA nucleotidylexotransferase (DNTT) from Gallus gallus (Chicken).